The primary structure comprises 290 residues: 4-hydroxy-tetrahydrodipicolinate synthase (290 aa).

Threonine 44 lines the pyruvate pocket. The active-site Proton donor/acceptor is tyrosine 132. Lysine 160 functions as the Schiff-base intermediate with substrate in the catalytic mechanism. Isoleucine 202 is a pyruvate binding site.

The protein belongs to the DapA family. Homotetramer; dimer of dimers.

Its subcellular location is the cytoplasm. The enzyme catalyses L-aspartate 4-semialdehyde + pyruvate = (2S,4S)-4-hydroxy-2,3,4,5-tetrahydrodipicolinate + H2O + H(+). Its pathway is amino-acid biosynthesis; L-lysine biosynthesis via DAP pathway; (S)-tetrahydrodipicolinate from L-aspartate: step 3/4. Its function is as follows. Catalyzes the condensation of (S)-aspartate-beta-semialdehyde [(S)-ASA] and pyruvate to 4-hydroxy-tetrahydrodipicolinate (HTPA). The chain is 4-hydroxy-tetrahydrodipicolinate synthase from Legionella pneumophila subsp. pneumophila (strain Philadelphia 1 / ATCC 33152 / DSM 7513).